A 300-amino-acid chain; its full sequence is N-acetylmuramic acid 6-phosphate etherase (300 aa).

The SIS domain occupies 55–217 (IAERLRAGGR…STGAMIRLGK (163 aa)). The active-site Proton donor is the Glu83. Glu114 is an active-site residue.

The protein belongs to the GCKR-like family. MurNAc-6-P etherase subfamily. In terms of assembly, homodimer.

It carries out the reaction N-acetyl-D-muramate 6-phosphate + H2O = N-acetyl-D-glucosamine 6-phosphate + (R)-lactate. It functions in the pathway amino-sugar metabolism; N-acetylmuramate degradation. In terms of biological role, specifically catalyzes the cleavage of the D-lactyl ether substituent of MurNAc 6-phosphate, producing GlcNAc 6-phosphate and D-lactate. The polypeptide is N-acetylmuramic acid 6-phosphate etherase (Symbiobacterium thermophilum (strain DSM 24528 / JCM 14929 / IAM 14863 / T)).